Here is a 237-residue protein sequence, read N- to C-terminus: 1-(5-phosphoribosyl)-5-[(5-phosphoribosylamino)methylideneamino] imidazole-4-carboxamide isomerase (237 aa).

D8 serves as the catalytic Proton acceptor. The active-site Proton donor is D129.

This sequence belongs to the HisA/HisF family.

It localises to the cytoplasm. It carries out the reaction 1-(5-phospho-beta-D-ribosyl)-5-[(5-phospho-beta-D-ribosylamino)methylideneamino]imidazole-4-carboxamide = 5-[(5-phospho-1-deoxy-D-ribulos-1-ylimino)methylamino]-1-(5-phospho-beta-D-ribosyl)imidazole-4-carboxamide. It participates in amino-acid biosynthesis; L-histidine biosynthesis; L-histidine from 5-phospho-alpha-D-ribose 1-diphosphate: step 4/9. The sequence is that of 1-(5-phosphoribosyl)-5-[(5-phosphoribosylamino)methylideneamino] imidazole-4-carboxamide isomerase from Acetivibrio thermocellus (strain ATCC 27405 / DSM 1237 / JCM 9322 / NBRC 103400 / NCIMB 10682 / NRRL B-4536 / VPI 7372) (Clostridium thermocellum).